A 250-amino-acid chain; its full sequence is Flavin-dependent thymidylate synthase (250 aa).

The 227-residue stretch at 7 to 233 (LSVELIACSS…PTVFGDFQVE (227 aa)) folds into the ThyX domain. Residues 92–95 (ELVR), 103–107 (QLSQR), and arginine 172 each bind dUMP. Residues 95-97 (RHR) and glutamine 103 contribute to the FAD site. The short motif at 95 to 105 (RHRHFSFSQLS) is the ThyX motif element. Residues 188–190 (NFR) and histidine 194 each bind FAD. Position 199 (arginine 199) interacts with dUMP. The active-site Involved in ionization of N3 of dUMP, leading to its activation is the arginine 199.

It belongs to the thymidylate synthase ThyX family. Homotetramer. FAD is required as a cofactor.

It catalyses the reaction dUMP + (6R)-5,10-methylene-5,6,7,8-tetrahydrofolate + NADPH + H(+) = dTMP + (6S)-5,6,7,8-tetrahydrofolate + NADP(+). It participates in pyrimidine metabolism; dTTP biosynthesis. Catalyzes the reductive methylation of 2'-deoxyuridine-5'-monophosphate (dUMP) to 2'-deoxythymidine-5'-monophosphate (dTMP) while utilizing 5,10-methylenetetrahydrofolate (mTHF) as the methyl donor, and NADPH and FADH(2) as the reductant. The protein is Flavin-dependent thymidylate synthase of Corynebacterium efficiens (strain DSM 44549 / YS-314 / AJ 12310 / JCM 11189 / NBRC 100395).